Here is a 388-residue protein sequence, read N- to C-terminus: 1-deoxy-D-xylulose 5-phosphate reductoisomerase (388 aa).

T15, G16, S17, I18, and N127 together coordinate NADPH. Residue K128 coordinates 1-deoxy-D-xylulose 5-phosphate. E129 serves as a coordination point for NADPH. D153 lines the Mn(2+) pocket. 1-deoxy-D-xylulose 5-phosphate contacts are provided by S154, E155, S179, and H202. E155 contacts Mn(2+). An NADPH-binding site is contributed by G208. Positions 215, 220, 221, and 224 each coordinate 1-deoxy-D-xylulose 5-phosphate. Residue E224 participates in Mn(2+) binding.

Belongs to the DXR family. The cofactor is Mg(2+). Mn(2+) serves as cofactor.

The enzyme catalyses 2-C-methyl-D-erythritol 4-phosphate + NADP(+) = 1-deoxy-D-xylulose 5-phosphate + NADPH + H(+). The protein operates within isoprenoid biosynthesis; isopentenyl diphosphate biosynthesis via DXP pathway; isopentenyl diphosphate from 1-deoxy-D-xylulose 5-phosphate: step 1/6. Catalyzes the NADPH-dependent rearrangement and reduction of 1-deoxy-D-xylulose-5-phosphate (DXP) to 2-C-methyl-D-erythritol 4-phosphate (MEP). The protein is 1-deoxy-D-xylulose 5-phosphate reductoisomerase of Bacteroides fragilis (strain ATCC 25285 / DSM 2151 / CCUG 4856 / JCM 11019 / LMG 10263 / NCTC 9343 / Onslow / VPI 2553 / EN-2).